Reading from the N-terminus, the 793-residue chain is E3 UFM1-protein ligase 1 (793 aa).

The residue at position 2 (Ala2) is an N-acetylalanine. Residues 2–200 (ADAWEEIRRL…RGLFSAITRP (199 aa)) form a mediates interaction with DDRGK1 region. The required for E3 UFM1-protein ligase activity stretch occupies residues 2–212 (ADAWEEIRRL…VNSLISKYGF (211 aa)). An involved in CDK5RAP3-binding region spans residues 121 to 250 (DRLAEEVNDK…KAVFVPDIYS (130 aa)). The mediates interaction with TRIP4 stretch occupies residues 200–400 (PTAVNSLISK…NPVHLITEED (201 aa)). A disordered region spans residues 407–473 (LESVSTSKKD…SSHTGKKKPE (67 aa)). An Omega-N-methylarginine modification is found at Arg433. Ser458 carries the post-translational modification Phosphoserine. Residues 490-684 (IQDAPEEFIS…QLKVTEDPAL (195 aa)) are mediates interaction with CDK5RAP3. Thr536 carries the phosphothreonine modification.

This sequence belongs to the UFL1 family. Catalytic component of the UFM1 ribosome E3 ligase (UREL) complex, composed of UFL1, DDRGK1 and CDK5RAP3. Interacts with E2-like enzyme UFC1. Interacts with RELA. Interacts with NBN; promoting recruitment to double-strand breaks following DNA damage. Interacts (when phosphorylated) with YWHAG/14-3-3-gamma; sequestering UFL1 and preventing its association with PDCD1/PD-1 substrate. Post-translationally, ubiquitinated, leading to its degradation by the proteasome. Interaction with CDK5RAP3 protects both proteins against ubiquitination and degradation via the proteasome. In terms of processing, phosphorylation at Thr-536 by AMPK promotes its interaction with YWHAG/14-3-3-gamma, thereby preventing UFL1 association with PDCD1/PD-1 substrate.

It localises to the endoplasmic reticulum membrane. The protein localises to the cytoplasm. The protein resides in the cytosol. Its subcellular location is the nucleus. It is found in the chromosome. Its function is as follows. E3 protein ligase that mediates ufmylation, the covalent attachment of the ubiquitin-like modifier UFM1 to lysine residues on target proteins, and which plays a key role in various processes, such as ribosome recycling, response to DNA damage, interferon response or reticulophagy (also called ER-phagy). Catalyzes ufmylation of many protein, such as CD274/PD-L1, CDK5RAP3, CYB5R3, DDRGK1, EIF6, histone H4, MRE11, P4HB, PDCD1/PD-1, TRIP4, RPN1, RPS20/uS10, RPL10/uL16, RPL26/uL24, SYVN1/HRD1 and TP53/p53. As part of the UREL complex, plays a key role in ribosome recycling by catalyzing mono-ufmylation of RPL26/uL24 subunit of the 60S ribosome. Ufmylation of RPL26/uL24 occurs on free 60S ribosomes following ribosome dissociation: it weakens the junction between post-termination 60S subunits and SEC61 translocons, promoting release and recycling of the large ribosomal subunit from the endoplasmic reticulum membrane. Ufmylation of RPL26/uL24 and subsequent 60S ribosome recycling either take place after normal termination of translation or after ribosome stalling during cotranslational translocation at the endoplasmic reticulum. Involved in reticulophagy in response to endoplasmic reticulum stress by mediating ufmylation of proteins such as CYB5R3 and RPN1, thereby promoting lysosomal degradation of ufmylated proteins. Ufmylation in response to endoplasmic reticulum stress is essential for processes such as hematopoiesis, blood vessel morphogenesis or inflammatory response. Mediates ufmylation of DDRGK1 and CDK5RAP3; the role of these modifications is however unclear: as both DDRGK1 and CDK5RAP3 act as substrate adapters for ufmylation, it is uncertain whether ufmylation of these proteins is, a collateral effect or is required for ufmylation. Acts as a negative regulator of T-cell activation by mediating ufmylation and stabilization of PDCD1/PD-1. Also involved in the response to DNA damage: recruited to double-strand break sites following DNA damage and mediates monoufmylation of histone H4 and ufmylation of MRE11. Mediates ufmylation of TP53/p53, promoting its stability. Catalyzes ufmylation of TRIP4, thereby playing a role in nuclear receptor-mediated transcription. Required for hematopoietic stem cell function and hematopoiesis. This chain is E3 UFM1-protein ligase 1, found in Macaca fascicularis (Crab-eating macaque).